We begin with the raw amino-acid sequence, 49 residues long: uncharacterized protein (49 aa).

A helical membrane pass occupies residues Leu-5–Ile-25.

The protein belongs to the plectrovirus ORF12 protein family.

It localises to the host membrane. This is an uncharacterized protein from Spiroplasma virus SpV1-R8A2 B (SpV1).